The following is a 103-amino-acid chain: Probable protease inhibitor Egf0.4b (103 aa).

Residues 1 to 22 (MMSEKFALVLLVACIAFIGIET) form the signal peptide. The TIL domain occupies 35–87 (CGENEAYDSMRRGCEERCDDHNPTFCFKFTTVCWCEKGYVRDKSDTCIKVEDC).

It belongs to the polydnaviridae EGF-like motif protein family.

The chain is Probable protease inhibitor Egf0.4b (O11) from Microplitis demolitor bracovirus (isolate Webb) (MdBV).